The primary structure comprises 231 residues: LexA repressor (231 aa).

Residues 28 to 48 constitute a DNA-binding region (H-T-H motif); the sequence is IREIGEALDIRSTNGVNDHLK. Active-site for autocatalytic cleavage activity residues include Ser-149 and Lys-186.

Belongs to the peptidase S24 family. As to quaternary structure, homodimer.

It catalyses the reaction Hydrolysis of Ala-|-Gly bond in repressor LexA.. Represses a number of genes involved in the response to DNA damage (SOS response), including recA and lexA. In the presence of single-stranded DNA, RecA interacts with LexA causing an autocatalytic cleavage which disrupts the DNA-binding part of LexA, leading to derepression of the SOS regulon and eventually DNA repair. This Anaeromyxobacter sp. (strain Fw109-5) protein is LexA repressor.